Reading from the N-terminus, the 180-residue chain is Pro-glucagon (180 aa).

An N-terminal signal peptide occupies residues 1-20 (MKTIYFVAGLFVMLVQGSWQ). The segment at 25 to 59 (NTEEKSRSFPAPQTDPLDDPDQMTEDKRHSQGTFT) is disordered. Phosphoserine is present on S54. A propeptide spanning residues 84–89 (NKNNIA) is cleaved from the precursor. Phosphoserine occurs at positions 105 and 108. R127 is subject to Arginine amide. A propeptide spanning residues 131-145 (DFPEEVTIVEELRRR) is cleaved from the precursor. 2 positions are modified to phosphoserine: S150 and S152.

The protein belongs to the glucagon family. Proglucagon is post-translationally processed in a tissue-specific manner in pancreatic A cells and intestinal L cells. In pancreatic A cells, the major bioactive hormone is glucagon cleaved by PCSK2/PC2. In the intestinal L cells PCSK1/PC1 liberates GLP-1, GLP-2, glicentin and oxyntomodulin. GLP-1 is further N-terminally truncated by post-translational processing in the intestinal L cells resulting in GLP-1(7-37) GLP-1-(7-36)amide. The C-terminal amidation is neither important for the metabolism of GLP-1 nor for its effects on the endocrine pancreas. In terms of tissue distribution, glucagon is secreted in the A cells of the islets of Langerhans. GLP-1, GLP-2, oxyntomodulin and glicentin are secreted from enteroendocrine cells throughout the gastrointestinal tract. GLP-1 and GLP-2 are also secreted in selected neurons in the brain.

Its subcellular location is the secreted. In terms of biological role, plays a key role in glucose metabolism and homeostasis. Regulates blood glucose by increasing gluconeogenesis and decreasing glycolysis. A counterregulatory hormone of insulin, raises plasma glucose levels in response to insulin-induced hypoglycemia. Plays an important role in initiating and maintaining hyperglycemic conditions in diabetes. Its function is as follows. Potent stimulator of glucose-dependent insulin release. Also stimulates insulin release in response to IL6. Plays important roles on gastric motility and the suppression of plasma glucagon levels. May be involved in the suppression of satiety and stimulation of glucose disposal in peripheral tissues, independent of the actions of insulin. Has growth-promoting activities on intestinal epithelium. May also regulate the hypothalamic pituitary axis (HPA) via effects on LH, TSH, CRH, oxytocin, and vasopressin secretion. Increases islet mass through stimulation of islet neogenesis and pancreatic beta cell proliferation. Inhibits beta cell apoptosis. Stimulates intestinal growth and up-regulates villus height in the small intestine, concomitant with increased crypt cell proliferation and decreased enterocyte apoptosis. The gastrointestinal tract, from the stomach to the colon is the principal target for GLP-2 action. Plays a key role in nutrient homeostasis, enhancing nutrient assimilation through enhanced gastrointestinal function, as well as increasing nutrient disposal. Stimulates intestinal glucose transport and decreases mucosal permeability. Functionally, significantly reduces food intake. Inhibits gastric emptying in humans. Suppression of gastric emptying may lead to increased gastric distension, which may contribute to satiety by causing a sensation of fullness. In terms of biological role, may modulate gastric acid secretion and the gastro-pyloro-duodenal activity. May play an important role in intestinal mucosal growth in the early period of life. The protein is Pro-glucagon (GCG) of Sus scrofa (Pig).